A 317-amino-acid polypeptide reads, in one-letter code: Transcriptional activator protein med (317 aa).

A signal peptide spans Met-1–Gly-17. Cys-18 carries N-palmitoyl cysteine lipidation. Residue Cys-18 is the site of S-diacylglycerol cysteine attachment.

This sequence belongs to the BMP lipoprotein family.

It is found in the cell membrane. Its function is as follows. Positive activator of the comK gene. This chain is Transcriptional activator protein med (med), found in Bacillus subtilis (strain 168).